The sequence spans 383 residues: Aliphatic nitrilase (383 aa).

The region spanning 13-288 (VKVATVQAEP…EGLLYAELDL (276 aa)) is the CN hydrolase domain. Residue Glu-53 is the Proton acceptor of the active site. The active-site Proton donor is Lys-136. Catalysis depends on Cys-170, which acts as the Nucleophile. The disordered stretch occupies residues 359–383 (ATLPLDAPAPAPAPEQKSGRAKAEA).

The protein belongs to the carbon-nitrogen hydrolase superfamily. Nitrilase family.

The catalysed reaction is an aliphatic nitrile + 2 H2O = a carboxylate + NH4(+). In terms of biological role, acts on aliphatic nitriles such as acrylonitrile, crotononitrile and glutaronitrile. The polypeptide is Aliphatic nitrilase (Rhodococcus rhodochrous).